We begin with the raw amino-acid sequence, 450 residues long: C4-dicarboxylate transport protein (450 aa).

9 consecutive transmembrane segments (helical) span residues 10–30, 46–66, 78–98, 143–163, 190–210, 224–244, 291–311, 332–352, and 354–374; these read SLYFQVIVAIVIGILIGHFYP, LIKMVIAPIIFCTVVSGIAGM, YALLYFEIVSTIALLIGLIVV, IVGAFANGDILQVLMFSVIFG, IINMIMKLAPLGAFGAMAFTI, LMICFYITCALFVVFVLGAIA, VVGLVIPTGYSFNLDGTSIYL, ITLLLVLLLSSKGAAGVTGSG, and IVLAATLSAVGHLPVAGLALI. Residues 428-450 form a disordered region; that stretch reads PEDDLGVAEGPTPGAAVNTTKTV.

Belongs to the dicarboxylate/amino acid:cation symporter (DAACS) (TC 2.A.23) family.

The protein localises to the cell inner membrane. Its function is as follows. Responsible for the transport of dicarboxylates such as succinate, fumarate, and malate from the periplasm across the membrane. The chain is C4-dicarboxylate transport protein from Pseudomonas syringae pv. syringae (strain B728a).